The sequence spans 287 residues: ATP synthase gamma chain (287 aa).

Belongs to the ATPase gamma chain family. In terms of assembly, F-type ATPases have 2 components, CF(1) - the catalytic core - and CF(0) - the membrane proton channel. CF(1) has five subunits: alpha(3), beta(3), gamma(1), delta(1), epsilon(1). CF(0) has three main subunits: a, b and c.

The protein localises to the cell inner membrane. In terms of biological role, produces ATP from ADP in the presence of a proton gradient across the membrane. The gamma chain is believed to be important in regulating ATPase activity and the flow of protons through the CF(0) complex. This Baumannia cicadellinicola subsp. Homalodisca coagulata protein is ATP synthase gamma chain.